Reading from the N-terminus, the 72-residue chain is NAD(P)H-quinone oxidoreductase subunit O (72 aa).

The protein belongs to the complex I NdhO subunit family. In terms of assembly, NDH-1 can be composed of about 15 different subunits; different subcomplexes with different compositions have been identified which probably have different functions.

It is found in the cellular thylakoid membrane. The enzyme catalyses a plastoquinone + NADH + (n+1) H(+)(in) = a plastoquinol + NAD(+) + n H(+)(out). It catalyses the reaction a plastoquinone + NADPH + (n+1) H(+)(in) = a plastoquinol + NADP(+) + n H(+)(out). Functionally, NDH-1 shuttles electrons from an unknown electron donor, via FMN and iron-sulfur (Fe-S) centers, to quinones in the respiratory and/or the photosynthetic chain. The immediate electron acceptor for the enzyme in this species is believed to be plastoquinone. Couples the redox reaction to proton translocation, and thus conserves the redox energy in a proton gradient. Cyanobacterial NDH-1 also plays a role in inorganic carbon-concentration. The protein is NAD(P)H-quinone oxidoreductase subunit O of Synechococcus sp. (strain JA-3-3Ab) (Cyanobacteria bacterium Yellowstone A-Prime).